Here is a 403-residue protein sequence, read N- to C-terminus: 3-hydroxy-3-methylglutaryl-coenzyme A reductase (403 aa).

Catalysis depends on charge relay system residues glutamate 99 and aspartate 303. The Proton donor role is filled by histidine 398.

Belongs to the HMG-CoA reductase family.

The enzyme catalyses (R)-mevalonate + 2 NADP(+) + CoA = (3S)-3-hydroxy-3-methylglutaryl-CoA + 2 NADPH + 2 H(+). The protein operates within metabolic intermediate biosynthesis; (R)-mevalonate biosynthesis; (R)-mevalonate from acetyl-CoA: step 3/3. Is competitively inhibited by (R)-HMG-CoA and lovastatin (formerly called mevinolin). Catalyzes the NADPH-dependent reductive deacylation of (S)-3-hydroxy-3-methylglutaryl-CoA (HMG-CoA) to (R)-mevalonate. Functions in the mevalonate (MVA) pathway leading to isopentenyl diphosphate (IPP), a key precursor for the biosynthesis of isoprenoid compounds such as archaeal membrane lipids. Is also able to catalyze the reduction of mevaldehyde to mevalonate and the oxidative acylation of mevaldehyde to HMG-CoA. The sequence is that of 3-hydroxy-3-methylglutaryl-coenzyme A reductase (hmgA) from Haloferax volcanii (strain ATCC 29605 / DSM 3757 / JCM 8879 / NBRC 14742 / NCIMB 2012 / VKM B-1768 / DS2) (Halobacterium volcanii).